The chain runs to 1320 residues: Junctional cadherin 5-associated protein (1320 aa).

Disordered regions lie at residues 1–124 (MYSV…GSGS), 183–202 (KKPR…KRPQ), 209–233 (YPFV…ALSP), 252–426 (GVPK…SIQY), 452–492 (DDTS…NEQS), 676–720 (ASSP…PTPT), 741–802 (NQKP…STTG), and 835–942 (ELQE…QKSQ). Composition is skewed to polar residues over residues 58-71 (RTSL…NSEN) and 95-107 (NQPS…QPQS). The span at 108–119 (GRDDIYWSRGRQ) shows a compositional bias: basic and acidic residues. The segment covering 255–267 (KVPPYPPSFPSPS) has biased composition (pro residues). The span at 308–329 (FQDHQHRDPRGSYPTRSKDPSH) shows a compositional bias: basic and acidic residues. Residues 338-356 (LEPPVYVPPPSYRSPPQHI) show a composition bias toward pro residues. A compositionally biased stretch (polar residues) spans 369–378 (VSSNQSQQQV). Pro residues predominate over residues 404–415 (GSPPQGLPPQPY). The span at 454 to 465 (TSYNPGLLTTQE) shows a compositional bias: polar residues. A Phosphothreonine modification is found at Thr-484. Ser-486 bears the Phosphoserine mark. The span at 741–782 (NQKPSVPHLQGQTSLSPSRNSAFSRTSSAINQASMSKGTSDQ) shows a compositional bias: polar residues. Residues 849–859 (EDSEAEQPEDC) show a composition bias toward acidic residues. Ser-851 bears the Phosphoserine mark. Residues 865-877 (KSWALQGTRTAQQ) are compositionally biased toward polar residues. 2 positions are modified to phosphoserine: Ser-1027 and Ser-1033. Disordered regions lie at residues 1085–1116 (ARRT…SLAL) and 1153–1174 (SDVD…KDEE). Ser-1245 and Ser-1248 each carry phosphoserine. Residues 1275-1320 (DEAWQAGHLPSVSQNENGHPEVPRDKMSDQDLWCADSYDPSRVERV) are disordered. Residues 1292–1303 (GHPEVPRDKMSD) are compositionally biased toward basic and acidic residues.

It localises to the cell junction. It is found in the adherens junction. The sequence is that of Junctional cadherin 5-associated protein from Mus musculus (Mouse).